The sequence spans 136 residues: UPF0216 protein PYRAB16100 (136 aa).

It belongs to the UPF0216 family.

This is UPF0216 protein PYRAB16100 from Pyrococcus abyssi (strain GE5 / Orsay).